Consider the following 302-residue polypeptide: Pathogenicity locus probable regulatory protein HrpS (302 aa).

The Sigma-54 factor interaction domain occupies aspartate 9 to leucine 237. ATP contacts are provided by residues glycine 37–aspartate 44 and alanine 99–glutamate 108. The segment at residues isoleucine 279–lysine 298 is a DNA-binding region (H-T-H motif).

Its function is as follows. Member of the two-component regulatory system HrpR/HrpS that regulates the activation of the sigma factor hrpL which itself induces the expression of hprD as well as other hrp loci which are involved in plant pathogenicity, hrmA and avr genes. Probably interacts with sigma-54. The polypeptide is Pathogenicity locus probable regulatory protein HrpS (hrpS) (Pseudomonas savastanoi pv. phaseolicola (Pseudomonas syringae pv. phaseolicola)).